Reading from the N-terminus, the 436-residue chain is 3-ketoacyl-CoA thiolase (436 aa).

The active-site Acyl-thioester intermediate is Cys99. Active-site proton acceptor residues include His392 and Cys422.

It belongs to the thiolase-like superfamily. Thiolase family. In terms of assembly, heterotetramer of two alpha chains (FadJ) and two beta chains (FadI).

It localises to the cytoplasm. The enzyme catalyses an acyl-CoA + acetyl-CoA = a 3-oxoacyl-CoA + CoA. The protein operates within lipid metabolism; fatty acid beta-oxidation. Its function is as follows. Catalyzes the final step of fatty acid oxidation in which acetyl-CoA is released and the CoA ester of a fatty acid two carbons shorter is formed. This is 3-ketoacyl-CoA thiolase from Shewanella frigidimarina (strain NCIMB 400).